The following is a 280-amino-acid chain: NAD kinase (280 aa).

Aspartate 67 functions as the Proton acceptor in the catalytic mechanism. NAD(+) contacts are provided by residues 67-68, arginine 72, 138-139, aspartate 167, alanine 175, 178-183, and glutamine 237; these read DG, ND, and TAYSLS.

The protein belongs to the NAD kinase family. A divalent metal cation serves as cofactor.

Its subcellular location is the cytoplasm. It carries out the reaction NAD(+) + ATP = ADP + NADP(+) + H(+). In terms of biological role, involved in the regulation of the intracellular balance of NAD and NADP, and is a key enzyme in the biosynthesis of NADP. Catalyzes specifically the phosphorylation on 2'-hydroxyl of the adenosine moiety of NAD to yield NADP. In Aeropyrum pernix (strain ATCC 700893 / DSM 11879 / JCM 9820 / NBRC 100138 / K1), this protein is NAD kinase.